We begin with the raw amino-acid sequence, 607 residues long: Albumin B (607 aa).

An N-terminal signal peptide occupies residues 1–18; it reads MKWITLICLLISSSFIES. The propeptide occupies 19–24; the sequence is RILFKR. Albumin domains follow at residues 22–209, 210–402, and 403–600; these read FKRD…KQLM, KQSH…RFMN, and EAKE…VLIE. H30 is a Cu cation binding site. 17 disulfide bridges follow: C80/C88, C101/C117, C116/C127, C147/C192, C191/C200, C223/C269, C268/C276, C288/C302, C301/C312, C339/C384, C383/C392, C415/C461, C460/C471, C484/C500, C499/C510, C537/C582, and C581/C590.

Belongs to the ALB/AFP/VDB family. As to expression, plasma.

The protein localises to the secreted. Serum albumin, the main protein of plasma, has a good binding capacity for water, Ca(2+), Na(+), K(+), fatty acids, hormones, bilirubin and drugs. Its main function is the regulation of the colloidal osmotic pressure of blood. The protein is Albumin B (alb-b) of Xenopus laevis (African clawed frog).